A 249-amino-acid polypeptide reads, in one-letter code: Cysteine desulfuration protein SufE (249 aa).

Catalysis depends on C154, which acts as the Cysteine persulfide intermediate.

Belongs to the SufE family. As to quaternary structure, monomer. Interacts with SufS; interaction enhances cysteine desulfurase activity of SufS. Post-translationally, proteolytically cleaved.

It is found in the plastid. The protein localises to the apicoplast. It functions in the pathway cofactor biosynthesis; iron-sulfur cluster biosynthesis. Functionally, participates in sulfur mobilization (SUF) pathway for iron-sulfur (Fe-S) cluster biogenesis. Enhances cysteine desulfurase activity of SufS. Probably functions as a sulfur acceptor for SufS. This is Cysteine desulfuration protein SufE from Plasmodium falciparum (isolate 3D7).